The chain runs to 172 residues: Large ribosomal subunit protein uL10 (172 aa).

It belongs to the universal ribosomal protein uL10 family. In terms of assembly, part of the ribosomal stalk of the 50S ribosomal subunit. The N-terminus interacts with L11 and the large rRNA to form the base of the stalk. The C-terminus forms an elongated spine to which L12 dimers bind in a sequential fashion forming a multimeric L10(L12)X complex.

Forms part of the ribosomal stalk, playing a central role in the interaction of the ribosome with GTP-bound translation factors. In Xanthobacter autotrophicus (strain ATCC BAA-1158 / Py2), this protein is Large ribosomal subunit protein uL10.